The primary structure comprises 212 residues: Peptide methionine sulfoxide reductase MsrA (212 aa).

Residue Cys52 is part of the active site.

Belongs to the MsrA Met sulfoxide reductase family.

The catalysed reaction is L-methionyl-[protein] + [thioredoxin]-disulfide + H2O = L-methionyl-(S)-S-oxide-[protein] + [thioredoxin]-dithiol. It catalyses the reaction [thioredoxin]-disulfide + L-methionine + H2O = L-methionine (S)-S-oxide + [thioredoxin]-dithiol. Has an important function as a repair enzyme for proteins that have been inactivated by oxidation. Catalyzes the reversible oxidation-reduction of methionine sulfoxide in proteins to methionine. This Cronobacter sakazakii (strain ATCC BAA-894) (Enterobacter sakazakii) protein is Peptide methionine sulfoxide reductase MsrA.